A 148-amino-acid chain; its full sequence is Transcription antitermination protein NusB (148 aa).

This sequence belongs to the NusB family.

Its function is as follows. Involved in transcription antitermination. Required for transcription of ribosomal RNA (rRNA) genes. Binds specifically to the boxA antiterminator sequence of the ribosomal RNA (rrn) operons. This chain is Transcription antitermination protein NusB, found in Saccharopolyspora erythraea (strain ATCC 11635 / DSM 40517 / JCM 4748 / NBRC 13426 / NCIMB 8594 / NRRL 2338).